Here is a 333-residue protein sequence, read N- to C-terminus: Glycerol-3-phosphate dehydrogenase [NAD(P)+] (333 aa).

3 residues coordinate NADPH: W11, R34, and K107. Sn-glycerol 3-phosphate is bound by residues K107, G136, and S138. A140 lines the NADPH pocket. Positions 191, 244, 254, 255, and 256 each coordinate sn-glycerol 3-phosphate. K191 (proton acceptor) is an active-site residue. R255 contributes to the NADPH binding site. I279 and E281 together coordinate NADPH.

This sequence belongs to the NAD-dependent glycerol-3-phosphate dehydrogenase family.

Its subcellular location is the cytoplasm. The catalysed reaction is sn-glycerol 3-phosphate + NAD(+) = dihydroxyacetone phosphate + NADH + H(+). It catalyses the reaction sn-glycerol 3-phosphate + NADP(+) = dihydroxyacetone phosphate + NADPH + H(+). Its pathway is membrane lipid metabolism; glycerophospholipid metabolism. Its function is as follows. Catalyzes the reduction of the glycolytic intermediate dihydroxyacetone phosphate (DHAP) to sn-glycerol 3-phosphate (G3P), the key precursor for phospholipid synthesis. This is Glycerol-3-phosphate dehydrogenase [NAD(P)+] from Nitrosospira multiformis (strain ATCC 25196 / NCIMB 11849 / C 71).